Here is a 738-residue protein sequence, read N- to C-terminus: Platelet endothelial cell adhesion molecule (738 aa).

The signal sequence occupies residues 1–27 (MQPRWAQGATMWLGVLLTLLLCSSLEG). Topologically, residues 28-601 (QENSFTINSV…VRVILAPWKK (574 aa)) are extracellular. 3 Ig-like C2-type domains span residues 35–121 (NSVD…KTTA), 145–233 (GGIV…TESF), and 236–315 (PKFH…SKVS). 3 N-linked (GlcNAc...) asparagine glycosylation sites follow: N52, N84, and N151. C57 and C109 are disulfide-bonded. Cystine bridges form between C152–C206 and C256–C304. N-linked (GlcNAc...) asparagine glycosylation is found at N301, N320, N344, N356, N453, and N551. Ig-like C2-type domains lie at 328 to 401 (PELE…NTVQ), 424 to 493 (GQTI…EVLR), and 499 to 591 (PVDE…KILT). 3 cysteine pairs are disulfide-bonded: C347–C386, C431–C476, and C523–C572. The helical transmembrane segment at 602 to 620 (GLIAVVIIGVIIALLIIAA) threads the bilayer. The Cytoplasmic portion of the chain corresponds to 621 to 738 (KCYFLRKAKA…SRTEGSLDGT (118 aa)). The S-palmitoyl cysteine moiety is linked to residue C622. Positions 658–715 (EANSHYGHNDDVRNHAMKPINDNKEPLNSDVQYTEVQVSSAESHKDLGKKDTETVYSE) are disordered. Residues 686 to 698 (SDVQYTEVQVSSA) show a composition bias toward polar residues. 2 short sequence motifs (ITIM motif) span residues 688 to 693 (VQYTEV) and 711 to 716 (TVYSEV). Phosphotyrosine; by FER occurs at positions 690 and 713. Positions 699–715 (ESHKDLGKKDTETVYSE) are enriched in basic and acidic residues. Residues 709–729 (TETVYSEVRKAVPDAVESRYS) form a membrane-bound segment which detaches upon phosphorylation region. The segment at 721–738 (PDAVESRYSRTEGSLDGT) is may play a role in cytoprotective signaling. Residues S729 and S734 each carry the phosphoserine modification.

As to quaternary structure, trans-homodimer (via Ig-like C2-type 1 and Ig-like C2-type 2 domains); trans-homodimerization is required for cell-cell interaction. Forms a complex with BDKRB2 and GNAQ. Interacts with BDKRB2 and GNAQ. Interacts with PTPN11; Tyr-713 is critical for PTPN11 recruitment. Interacts with FER. Interacts (via Ig-like C2-type domain 6) with CD177; the interaction is Ca(2+)-dependent; the interaction is direct. Post-translationally, phosphorylated on Ser and Tyr residues after cellular activation by src kinases. Upon activation, phosphorylated on Ser-729 which probably initiates the dissociation of the membrane-interaction segment (residues 709-729) from the cell membrane allowing the sequential phosphorylation of Tyr-713 and Tyr-690. Constitutively phosphorylated on Ser-734 in resting platelets. Phosphorylated on tyrosine residues by FER and FES in response to FCER1 activation. In endothelial cells Fyn mediates mechanical-force (stretch or pull) induced tyrosine phosphorylation. In terms of processing, palmitoylation by ZDHHC21 is necessary for cell surface expression in endothelial cells and enrichment in membrane rafts. In terms of tissue distribution, expressed on platelets and leukocytes and is primarily concentrated at the borders between endothelial cells. Expressed in human umbilical vein endothelial cells (HUVECs) (at protein level). Expressed on neutrophils (at protein level). Isoform Long predominates in all tissues examined. Isoform Delta12 is detected only in trachea. Isoform Delta14-15 is only detected in lung. Isoform Delta14 is detected in all tissues examined with the strongest expression in heart. Isoform Delta15 is expressed in brain, testis, ovary, cell surface of platelets, human umbilical vein endothelial cells (HUVECs), Jurkat T-cell leukemia, human erythroleukemia (HEL) and U-937 histiocytic lymphoma cell lines (at protein level).

The protein resides in the cell membrane. It localises to the membrane raft. Its subcellular location is the cell junction. Its function is as follows. Cell adhesion molecule which is required for leukocyte transendothelial migration (TEM) under most inflammatory conditions. Tyr-690 plays a critical role in TEM and is required for efficient trafficking of PECAM1 to and from the lateral border recycling compartment (LBRC) and is also essential for the LBRC membrane to be targeted around migrating leukocytes. Trans-homophilic interaction may play a role in endothelial cell-cell adhesion via cell junctions. Heterophilic interaction with CD177 plays a role in transendothelial migration of neutrophils. Homophilic ligation of PECAM1 prevents macrophage-mediated phagocytosis of neighboring viable leukocytes by transmitting a detachment signal. Promotes macrophage-mediated phagocytosis of apoptotic leukocytes by tethering them to the phagocytic cells; PECAM1-mediated detachment signal appears to be disabled in apoptotic leukocytes. Modulates bradykinin receptor BDKRB2 activation. Regulates bradykinin- and hyperosmotic shock-induced ERK1/2 activation in endothelial cells. Induces susceptibility to atherosclerosis. Does not protect against apoptosis. This chain is Platelet endothelial cell adhesion molecule (PECAM1), found in Homo sapiens (Human).